A 93-amino-acid polypeptide reads, in one-letter code: Large ribosomal subunit protein uL23cz/uL23cy (93 aa).

Belongs to the universal ribosomal protein uL23 family. Part of the 50S ribosomal subunit.

It is found in the plastid. It localises to the chloroplast. Functionally, binds to 23S rRNA. The polypeptide is Large ribosomal subunit protein uL23cz/uL23cy (rpl23-A) (Drimys granadensis).